We begin with the raw amino-acid sequence, 120 residues long: Large ribosomal subunit protein uL18 (120 aa).

The protein belongs to the universal ribosomal protein uL18 family. In terms of assembly, part of the 50S ribosomal subunit; part of the 5S rRNA/L5/L18/L25 subcomplex. Contacts the 5S and 23S rRNAs.

Functionally, this is one of the proteins that bind and probably mediate the attachment of the 5S RNA into the large ribosomal subunit, where it forms part of the central protuberance. The sequence is that of Large ribosomal subunit protein uL18 from Bartonella henselae (strain ATCC 49882 / DSM 28221 / CCUG 30454 / Houston 1) (Rochalimaea henselae).